The primary structure comprises 146 residues: Large ribosomal subunit protein uL22 (146 aa).

The segment at 1-39 (MAETQTTTPKKKAERRAPPPARARKNRPAAPAPGPHASL) is disordered.

This sequence belongs to the universal ribosomal protein uL22 family. As to quaternary structure, part of the 50S ribosomal subunit.

Its function is as follows. This protein binds specifically to 23S rRNA; its binding is stimulated by other ribosomal proteins, e.g. L4, L17, and L20. It is important during the early stages of 50S assembly. It makes multiple contacts with different domains of the 23S rRNA in the assembled 50S subunit and ribosome. Functionally, the globular domain of the protein is located near the polypeptide exit tunnel on the outside of the subunit, while an extended beta-hairpin is found that lines the wall of the exit tunnel in the center of the 70S ribosome. The protein is Large ribosomal subunit protein uL22 of Anaeromyxobacter dehalogenans (strain 2CP-1 / ATCC BAA-258).